The primary structure comprises 575 residues: RecBCD enzyme subunit RecD (575 aa).

Position 170 to 177 (170 to 177 (GGPGTGKT)) interacts with ATP.

The protein belongs to the RecD family. As to quaternary structure, heterotrimer of RecB, RecC and RecD. All subunits contribute to DNA-binding.

It catalyses the reaction Couples ATP hydrolysis with the unwinding of duplex DNA at the replication fork by translocating in the 5'-3' direction. This creates two antiparallel DNA single strands (ssDNA). The leading ssDNA polymer is the template for DNA polymerase III holoenzyme which synthesizes a continuous strand.. It carries out the reaction ATP + H2O = ADP + phosphate + H(+). Functionally, a helicase/nuclease that prepares dsDNA breaks (DSB) for recombinational DNA repair. Binds to DSBs and unwinds DNA via a highly rapid and processive ATP-dependent bidirectional helicase activity. Holoenzyme degrades any linearized DNA that is unable to undergo homologous recombination. In the holoenzyme this subunit has ssDNA-dependent ATPase and 5'-3' helicase activity. When added to pre-assembled RecBC greatly stimulates nuclease activity and augments holoenzyme processivity. Unlike the case in E.coli, suppresses RecA-dependent homologous recombination, is instead required for single-strand annealing pathway repair of DSB. Its function is as follows. A helicase/nuclease that prepares dsDNA breaks (DSB) for recombinational DNA repair. Binds to DSBs and unwinds DNA via a highly rapid and processive ATP-dependent bidirectional helicase activity. Unwinds dsDNA until it encounters a Chi (crossover hotspot instigator) sequence from the 3' direction. Cuts ssDNA a few nucleotides 3' to the Chi site. The properties and activities of the enzyme are changed at Chi. The Chi-altered holoenzyme produces a long 3'-ssDNA overhang and facilitates RecA-binding to the ssDNA for homologous DNA recombination and repair. Holoenzyme degrades any linearized DNA that is unable to undergo homologous recombination. In the holoenzyme this subunit has ssDNA-dependent ATPase and 5'-3' helicase activity. When added to pre-assembled RecBC greatly stimulates nuclease activity and augments holoenzyme processivity. Negatively regulates the RecA-loading ability of RecBCD. The polypeptide is RecBCD enzyme subunit RecD (Mycobacterium tuberculosis (strain CDC 1551 / Oshkosh)).